A 336-amino-acid polypeptide reads, in one-letter code: N-acetylornithine carbamoyltransferase (336 aa).

Carbamoyl phosphate contacts are provided by residues 49-52 (SMRT), Trp-77, and Arg-112. Glu-144 serves as a coordination point for N(2)-acetyl-L-ornithine. 148 to 151 (HPCQ) contacts carbamoyl phosphate. Positions 252 and 295 each coordinate N(2)-acetyl-L-ornithine. 294–295 (CL) provides a ligand contact to carbamoyl phosphate. Residue Lys-302 is modified to N6-carboxylysine. Carbamoyl phosphate is bound at residue Arg-322.

This sequence belongs to the aspartate/ornithine carbamoyltransferase superfamily. AOTCase family. Homotrimer.

The protein localises to the cytoplasm. The enzyme catalyses N(2)-acetyl-L-ornithine + carbamoyl phosphate = N(2)-acetyl-L-citrulline + phosphate + H(+). It functions in the pathway amino-acid biosynthesis; L-arginine biosynthesis. Its activity is regulated as follows. Carboxylation at Lys-302 increases the catalytic activity of the enzyme. Its function is as follows. Catalyzes the transfer of the carbamoyl group from carbamoyl phosphate to the delta-amino group of N(2)-acetyl-L-ornithine to produce N(2)-acetyl-L-citrulline. This is a step in an alternative arginine biosynthesis pathway. The enzyme has no activity with ornithine. The protein is N-acetylornithine carbamoyltransferase of Xylella fastidiosa (strain Temecula1 / ATCC 700964).